The following is a 212-amino-acid chain: uncharacterized protein (212 aa).

The tract at residues 47–129 (RELLDRRRSQ…GNIDNGQPRR (83 aa)) is disordered.

This is an uncharacterized protein from Caenorhabditis elegans.